The primary structure comprises 500 residues: MNYFPWLTIIVVFPIFAGSLIFFLPHKGNRVIRWYTICICILELLLTTYAFCYHFQSDDPLIQLVEDYKWINFFDFHWRLGIDGLSIGPILLTGFITTLATLAAWPITRDSRLFHFLMLAMYSGQIGSFSSRDLLLFFIMWELELIPVYLLLCMWGGKKRLYSATKFILYTAGGSVFLLMGVLGVALYGSNEPTLNFETSVNQSYPVVLEIIFYIGFFIAFAVKSPIIPLHTWLPDTHGEAHYSTCMLLAGILLKMGAYGLIRINMELLPHAHSIFSPWLMIIGTIQIIYAASTSLGQRNLKKRIAYSSVSHMGFIIIGISSLTDTGLNGALLQIISHGFIGAALFFLAGTTYDRIRLVYLDEMGGIASPMPKMFTMFSSFSMASLALPGMSGFVAELIVFFGIITGQKYLLIPKILITFVMAIGMILTPIYSLSMSRQMFYGYKLFNAPKDSFFDSGPRELFLSISIFLPVIGIGIYPDFVLSLAVDKVEVILSNFFYR.

14 helical membrane passes run 4–24, 35–55, 87–107, 113–130, 134–154, 167–187, 208–228, 242–262, 272–292, 305–325, 330–350, 386–406, 411–431, and 462–482; these read FPWL…IFFL, YTIC…CYHF, IGPI…AWPI, LFHF…GSFS, LLLF…LLCM, FILY…GVAL, VLEI…SPII, HYST…YGLI, AHSI…IYAA, IAYS…SLTD, GALL…FLAG, LALP…GIIT, LLIP…LTPI, and LFLS…PDFV.

It belongs to the complex I subunit 4 family.

The protein resides in the plastid. It localises to the chloroplast thylakoid membrane. It carries out the reaction a plastoquinone + NADH + (n+1) H(+)(in) = a plastoquinol + NAD(+) + n H(+)(out). It catalyses the reaction a plastoquinone + NADPH + (n+1) H(+)(in) = a plastoquinol + NADP(+) + n H(+)(out). In Nicotiana tomentosiformis (Tobacco), this protein is NAD(P)H-quinone oxidoreductase chain 4, chloroplastic.